Consider the following 280-residue polypeptide: Thylakoid lumenal protein TL20.3, chloroplastic (280 aa).

The transit peptide at 1 to 59 (MAFSSLSPLPMKSLDISRSSSSVSRSPYHFQRYLLRRLQLSSRSNLEIKDSSNTREGCC) directs the protein to the chloroplast. A thylakoid-targeting transit peptide spans 60-90 (SSAESNTWKRILSAAMAAAVIASSSGVPAMA). 2 consecutive Pentapeptide repeat domains span residues 124–163 (ENFR…NFSG) and 169–208 (TLMD…DFSD).

Interacts with thioredoxin. Interacts in vitro with LTO1.

Its subcellular location is the plastid. The protein resides in the chloroplast thylakoid lumen. Pentapeptide repeat protein of unknown function. Subject to degradation when reduced. This chain is Thylakoid lumenal protein TL20.3, chloroplastic, found in Arabidopsis thaliana (Mouse-ear cress).